A 116-amino-acid chain; its full sequence is NADPH-dependent 7-cyano-7-deazaguanine reductase (116 aa).

The active-site Thioimide intermediate is C31. D38 acts as the Proton donor in catalysis. Residues 53–55 and 72–73 contribute to the substrate site; these read IEL and YE.

It belongs to the GTP cyclohydrolase I family. QueF type 1 subfamily.

It localises to the cytoplasm. It carries out the reaction 7-aminomethyl-7-carbaguanine + 2 NADP(+) = 7-cyano-7-deazaguanine + 2 NADPH + 3 H(+). Its pathway is tRNA modification; tRNA-queuosine biosynthesis. In terms of biological role, catalyzes the NADPH-dependent reduction of 7-cyano-7-deazaguanine (preQ0) to 7-aminomethyl-7-deazaguanine (preQ1). The protein is NADPH-dependent 7-cyano-7-deazaguanine reductase of Chlorobium luteolum (strain DSM 273 / BCRC 81028 / 2530) (Pelodictyon luteolum).